The chain runs to 241 residues: Small ribosomal subunit protein uS3 (241 aa).

The KH type-2 domain maps to 39 to 109 (IRQYITKNLS…QIRINVIEVQ (71 aa)). Residues 214-241 (EEIPMPVPSQTPRRQRRRQQFEDRSGEE) form a disordered region. The span at 232-241 (QQFEDRSGEE) shows a compositional bias: basic and acidic residues.

Belongs to the universal ribosomal protein uS3 family. Part of the 30S ribosomal subunit. Forms a tight complex with proteins S10 and S14.

Binds the lower part of the 30S subunit head. Binds mRNA in the 70S ribosome, positioning it for translation. The polypeptide is Small ribosomal subunit protein uS3 (Rippkaea orientalis (strain PCC 8801 / RF-1) (Cyanothece sp. (strain PCC 8801))).